Here is a 943-residue protein sequence, read N- to C-terminus: Coiled-coil and C2 domain-containing protein 1A (943 aa).

T91 carries the post-translational modification Phosphothreonine. 2 disordered regions span residues 186 to 250 (NEAD…CSPL) and 300 to 337 (DLSR…VPQP). Composition is skewed to low complexity over residues 195–206 (ASGKGAAAGHSH) and 229–238 (APSTTTPTSA). At S248 the chain carries Phosphoserine. A compositionally biased stretch (pro residues) spans 304 to 319 (LPPPPDQLSPEPPLPA). The stretch at 339–385 (RNLLEALEQRMERYHVAAAQAKAKGDQRKARMHERIVKQYQDAIRAH) forms a coiled coil. Positions 430–483 (NHDEGSDDEEEETPKKQNTPAASTTQLKSSPSKAPPSGPAPAGKAAPKGTSNRA) are disordered. S435 is modified (phosphoserine). The segment covering 445 to 456 (KQNTPAASTTQL) has biased composition (polar residues). Residues 469–478 (APAGKAAPKG) are compositionally biased toward low complexity. Positions 477-510 (KGTSNRAQQQLAFLEGRKKQLLQAALRAKQKNDV) form a coiled coil. The C2 domain maps to 630–764 (RFEQRTFSVI…ETACEVHEIL (135 aa)).

This sequence belongs to the CC2D1 family. In terms of tissue distribution, highly expressed in brain, expression is enriched in the gray matter and strongest in the olfactory bulb.

It localises to the cytoplasm. It is found in the nucleus. Its subcellular location is the cytoskeleton. The protein resides in the microtubule organizing center. The protein localises to the centrosome. Its function is as follows. Transcription factor that binds specifically to the DRE (dual repressor element) and represses HTR1A gene transcription in neuronal cells. The combination of calcium and ATP specifically inactivates the binding with FRE. May play a role in the altered regulation of HTR1A associated with anxiety and major depression. Mediates HDAC-independent repression of HTR1A promoter in neuronal cell. Performs essential function in controlling functional maturation of synapses. The polypeptide is Coiled-coil and C2 domain-containing protein 1A (Cc2d1a) (Mus musculus (Mouse)).